The following is a 357-amino-acid chain: Trans-enoyl reductase resD (357 aa).

Residue Tyr-211 participates in NADP(+) binding.

It belongs to the zinc-containing alcohol dehydrogenase family.

Its pathway is antifungal biosynthesis. Its function is as follows. Trans-enoyl reductase; part of the gene cluster that mediates the biosynthesis of the tetrahydropyranyl antifungal agent restricticin that acts as an inhibitor of CYP51 and blocks the ergosterol biosynthesis. The highly reducing polyketide synthase resH, the short chain dehydrogenase resG, the cyclase resF, the FAD-dependent monooxygenase resA and the enoylreductase resD are required to generate the first stable intermediate desmethylrestrictinol. ResH with resD biosynthesize the first polyketide chain intermediate that is reduced by resG, followed by epoxidation by resA before 6-endo cyclization via epoxide opening by resF leads to desmethylrestrictinol. The methyltransferase resE then catalyzes the C4 O-methylation of desmethylrestrictinol to produce restrictinol, and the nonribosomal peptide synthetase resC catalyzes the C3 esterification of restrictinol with glycine that leads to restricticin. The sequence is that of Trans-enoyl reductase resD from Aspergillus sclerotiorum.